A 91-amino-acid chain; its full sequence is CRISPR-associated endoribonuclease Cas2 2 (91 aa).

Position 6 (D6) interacts with Mg(2+).

This sequence belongs to the CRISPR-associated endoribonuclease Cas2 protein family. As to quaternary structure, homodimer, forms a heterotetramer with a Cas1 homodimer. Mg(2+) serves as cofactor.

Functionally, CRISPR (clustered regularly interspaced short palindromic repeat), is an adaptive immune system that provides protection against mobile genetic elements (viruses, transposable elements and conjugative plasmids). CRISPR clusters contain sequences complementary to antecedent mobile elements and target invading nucleic acids. CRISPR clusters are transcribed and processed into CRISPR RNA (crRNA). Functions as a ssRNA-specific endoribonuclease. Involved in the integration of spacer DNA into the CRISPR cassette. In Moorella thermoacetica (strain ATCC 39073 / JCM 9320), this protein is CRISPR-associated endoribonuclease Cas2 2.